Consider the following 418-residue polypeptide: Glutamyl-tRNA reductase (418 aa).

Substrate contacts are provided by residues threonine 49–arginine 52, serine 108, glutamate 113–glutamine 115, and glutamine 119. The active-site Nucleophile is cysteine 50. Residue glycine 188–isoleucine 193 participates in NADP(+) binding.

It belongs to the glutamyl-tRNA reductase family. Homodimer.

The enzyme catalyses (S)-4-amino-5-oxopentanoate + tRNA(Glu) + NADP(+) = L-glutamyl-tRNA(Glu) + NADPH + H(+). It functions in the pathway porphyrin-containing compound metabolism; protoporphyrin-IX biosynthesis; 5-aminolevulinate from L-glutamyl-tRNA(Glu): step 1/2. In terms of biological role, catalyzes the NADPH-dependent reduction of glutamyl-tRNA(Glu) to glutamate 1-semialdehyde (GSA). This is Glutamyl-tRNA reductase from Aliivibrio salmonicida (strain LFI1238) (Vibrio salmonicida (strain LFI1238)).